A 423-amino-acid chain; its full sequence is Histidine--tRNA ligase 2 (423 aa).

The protein belongs to the class-II aminoacyl-tRNA synthetase family. In terms of assembly, homodimer.

It is found in the cytoplasm. It catalyses the reaction tRNA(His) + L-histidine + ATP = L-histidyl-tRNA(His) + AMP + diphosphate + H(+). The chain is Histidine--tRNA ligase 2 from Bacillus anthracis.